A 423-amino-acid polypeptide reads, in one-letter code: ATP-citrate synthase alpha chain protein 2 (423 aa).

Positions 343, 345, and 376 each coordinate citrate.

The protein belongs to the succinate/malate CoA ligase beta subunit family. As to quaternary structure, heterooctamer of 4 alpha and 4 beta chains.

The protein resides in the cytoplasm. It localises to the cytosol. The catalysed reaction is oxaloacetate + acetyl-CoA + ADP + phosphate = citrate + ATP + CoA. Its function is as follows. ATP citrate-lyase is the primary enzyme responsible for the synthesis of cytosolic acetyl-CoA, used for the elongation of fatty acids and biosynthesis of isoprenoids, flavonoids and malonated derivatives. May supply substrate to the cytosolic acetyl-CoA carboxylase, which generates the malonyl-CoA used for the synthesis of a multitude of compounds, including very long chain fatty acids and flavonoids. Required for normal growth and development and elongation of C18 fatty acids to C20 to C24 fatty acids in seeds. In contrast to all known animal ACL enzymes having a homomeric structure, plant ACLs are composed of alpha and beta chains. This is ATP-citrate synthase alpha chain protein 2 (ACLA-2) from Arabidopsis thaliana (Mouse-ear cress).